The sequence spans 56 residues: Preprotein translocase subunit SecG (56 aa).

Residues Met1–Ser29 are Cytoplasmic-facing. A helical transmembrane segment spans residues Pro30–Met49. At Phe50 to Gly56 the chain is on the extracellular side.

This sequence belongs to the SEC61-beta family. In terms of assembly, component of the protein translocase complex. Heterotrimer consisting of alpha (SecY), beta (SecG) and gamma (SecE) subunits. Can form oligomers of the heterotrimer.

Its subcellular location is the cell membrane. Involved in protein export. The function of the beta subunit is unknown, but it may be involved in stabilization of the trimeric complex. The protein is Preprotein translocase subunit SecG of Thermococcus kodakarensis (strain ATCC BAA-918 / JCM 12380 / KOD1) (Pyrococcus kodakaraensis (strain KOD1)).